The primary structure comprises 1361 residues: DNA-directed RNA polymerase subunit beta (1361 aa).

This sequence belongs to the RNA polymerase beta chain family. As to quaternary structure, the RNAP catalytic core consists of 2 alpha, 1 beta, 1 beta' and 1 omega subunit. When a sigma factor is associated with the core the holoenzyme is formed, which can initiate transcription.

It catalyses the reaction RNA(n) + a ribonucleoside 5'-triphosphate = RNA(n+1) + diphosphate. Functionally, DNA-dependent RNA polymerase catalyzes the transcription of DNA into RNA using the four ribonucleoside triphosphates as substrates. The protein is DNA-directed RNA polymerase subunit beta of Saccharophagus degradans (strain 2-40 / ATCC 43961 / DSM 17024).